Reading from the N-terminus, the 389-residue chain is Aminomethyltransferase (389 aa).

It belongs to the GcvT family. In terms of assembly, the glycine cleavage system is composed of four proteins: P, T, L and H.

The catalysed reaction is N(6)-[(R)-S(8)-aminomethyldihydrolipoyl]-L-lysyl-[protein] + (6S)-5,6,7,8-tetrahydrofolate = N(6)-[(R)-dihydrolipoyl]-L-lysyl-[protein] + (6R)-5,10-methylene-5,6,7,8-tetrahydrofolate + NH4(+). Functionally, the glycine cleavage system catalyzes the degradation of glycine. The sequence is that of Aminomethyltransferase from Corynebacterium jeikeium (strain K411).